We begin with the raw amino-acid sequence, 263 residues long: Uracil-DNA glycosylase (263 aa).

The active-site Proton acceptor is the aspartate 94.

This sequence belongs to the uracil-DNA glycosylase (UDG) superfamily. UNG family.

Its subcellular location is the cytoplasm. It catalyses the reaction Hydrolyzes single-stranded DNA or mismatched double-stranded DNA and polynucleotides, releasing free uracil.. Functionally, excises uracil residues from the DNA which can arise as a result of misincorporation of dUMP residues by DNA polymerase or due to deamination of cytosine. This Ralstonia pickettii (strain 12J) protein is Uracil-DNA glycosylase.